The primary structure comprises 213 residues: Motile sperm domain-containing protein 1 (213 aa).

Residues 16-143 (PVFVFPTELI…KEHLTESLFF (128 aa)) enclose the MSP domain. The next 2 membrane-spanning stretches (helical) occupy residues 159–179 (SLLTVFLAVVCITALMLPTLG) and 191–211 (LSVNQKLVAAYILGLITMAIF). The Nuclear export signal motif lies at 205 to 208 (LITM).

The protein resides in the endoplasmic reticulum membrane. Its subcellular location is the golgi apparatus membrane. In terms of biological role, plays a role in differentiation and/or proliferation of mesenchymal stem cells. Proposed to be involved in epithelial-to-mesenchymal transition (EMT). However, another study suggests that it is not required for EMT or stem cell self-renewal and acts during later stages of differentiation. The protein is Motile sperm domain-containing protein 1 (MOSPD1) of Bos taurus (Bovine).